The following is a 180-amino-acid chain: NAD(P)H-quinone oxidoreductase subunit I, chloroplastic (180 aa).

2 consecutive 4Fe-4S ferredoxin-type domains span residues 55-84 (GRIHFEFDKCIACEVCVRVCPIDLPVVNWR) and 95-124 (LNYSIDFGICIFCGNCVEYCPTNCLSMTEE). Residues cysteine 64, cysteine 67, cysteine 70, cysteine 74, cysteine 104, cysteine 107, cysteine 110, and cysteine 114 each contribute to the [4Fe-4S] cluster site.

This sequence belongs to the complex I 23 kDa subunit family. NDH is composed of at least 16 different subunits, 5 of which are encoded in the nucleus. It depends on [4Fe-4S] cluster as a cofactor.

It localises to the plastid. Its subcellular location is the chloroplast thylakoid membrane. It catalyses the reaction a plastoquinone + NADH + (n+1) H(+)(in) = a plastoquinol + NAD(+) + n H(+)(out). It carries out the reaction a plastoquinone + NADPH + (n+1) H(+)(in) = a plastoquinol + NADP(+) + n H(+)(out). Its function is as follows. NDH shuttles electrons from NAD(P)H:plastoquinone, via FMN and iron-sulfur (Fe-S) centers, to quinones in the photosynthetic chain and possibly in a chloroplast respiratory chain. The immediate electron acceptor for the enzyme in this species is believed to be plastoquinone. Couples the redox reaction to proton translocation, and thus conserves the redox energy in a proton gradient. The chain is NAD(P)H-quinone oxidoreductase subunit I, chloroplastic from Platanus occidentalis (Sycamore).